The sequence spans 241 residues: Sugar fermentation stimulation protein homolog (241 aa).

It belongs to the SfsA family.

This is Sugar fermentation stimulation protein homolog from Thermosynechococcus vestitus (strain NIES-2133 / IAM M-273 / BP-1).